We begin with the raw amino-acid sequence, 132 residues long: Flagellar basal body rod protein FlgB (132 aa).

It belongs to the flagella basal body rod proteins family. As to quaternary structure, the basal body constitutes a major portion of the flagellar organelle and consists of a number of rings mounted on a central rod. In Gram-negative bacteria, at least four rings, L, P, S and M are present, whereas Gram-positive bacteria lack the L and P rings. The rod consists of about 26 subunits of FlgG in the distal portion, and FlgB, FlgC and FlgF build up the proximal portion of the rod with about 6 subunits each. Rod assembly occurs by export via the flagellum-specific pathway of its constituent proteins and by their incorporation into the rod structure in the probable order of FlgB, FlgC, FlgF and FlgG. Another protein, FliE, also assembles onto the stable rod structure.

The protein localises to the bacterial flagellum basal body. Structural component of flagellum, the bacterial motility apparatus. Part of the rod structure of flagellar basal body. The protein is Flagellar basal body rod protein FlgB of Aeromonas hydrophila.